We begin with the raw amino-acid sequence, 274 residues long: 2,3,4,5-tetrahydropyridine-2,6-dicarboxylate N-succinyltransferase (274 aa).

Substrate is bound by residues R106 and D143.

The protein belongs to the transferase hexapeptide repeat family. As to quaternary structure, homotrimer.

It is found in the cytoplasm. The catalysed reaction is (S)-2,3,4,5-tetrahydrodipicolinate + succinyl-CoA + H2O = (S)-2-succinylamino-6-oxoheptanedioate + CoA. The protein operates within amino-acid biosynthesis; L-lysine biosynthesis via DAP pathway; LL-2,6-diaminopimelate from (S)-tetrahydrodipicolinate (succinylase route): step 1/3. The protein is 2,3,4,5-tetrahydropyridine-2,6-dicarboxylate N-succinyltransferase of Rickettsia felis (strain ATCC VR-1525 / URRWXCal2) (Rickettsia azadi).